Reading from the N-terminus, the 479-residue chain is 3-isopropylmalate dehydratase large subunit (479 aa).

Positions 353, 414, and 417 each coordinate [4Fe-4S] cluster.

This sequence belongs to the aconitase/IPM isomerase family. LeuC type 1 subfamily. In terms of assembly, heterodimer of LeuC and LeuD. [4Fe-4S] cluster is required as a cofactor.

The enzyme catalyses (2R,3S)-3-isopropylmalate = (2S)-2-isopropylmalate. It participates in amino-acid biosynthesis; L-leucine biosynthesis; L-leucine from 3-methyl-2-oxobutanoate: step 2/4. Catalyzes the isomerization between 2-isopropylmalate and 3-isopropylmalate, via the formation of 2-isopropylmaleate. This Xanthomonas campestris pv. campestris (strain 8004) protein is 3-isopropylmalate dehydratase large subunit.